A 117-amino-acid chain; its full sequence is Large ribosomal subunit protein bL20 (117 aa).

It belongs to the bacterial ribosomal protein bL20 family.

Functionally, binds directly to 23S ribosomal RNA and is necessary for the in vitro assembly process of the 50S ribosomal subunit. It is not involved in the protein synthesizing functions of that subunit. This chain is Large ribosomal subunit protein bL20, found in Geobacter metallireducens (strain ATCC 53774 / DSM 7210 / GS-15).